The chain runs to 356 residues: tRNA N6-adenosine threonylcarbamoyltransferase (356 aa).

2 residues coordinate Fe cation: H115 and H119. Substrate-binding positions include L138–G142, D171, G184, and N283. Residue D311 participates in Fe cation binding.

The protein belongs to the KAE1 / TsaD family. Fe(2+) is required as a cofactor.

It is found in the cytoplasm. It carries out the reaction L-threonylcarbamoyladenylate + adenosine(37) in tRNA = N(6)-L-threonylcarbamoyladenosine(37) in tRNA + AMP + H(+). Required for the formation of a threonylcarbamoyl group on adenosine at position 37 (t(6)A37) in tRNAs that read codons beginning with adenine. Is involved in the transfer of the threonylcarbamoyl moiety of threonylcarbamoyl-AMP (TC-AMP) to the N6 group of A37, together with TsaE and TsaB. TsaD likely plays a direct catalytic role in this reaction. This Synechococcus sp. (strain WH7803) protein is tRNA N6-adenosine threonylcarbamoyltransferase.